The following is a 213-amino-acid chain: Histone H1.2 (213 aa).

Residues 1–17 are compositionally biased toward low complexity; that stretch reads MSETAPAAPAAAPPAEK. Positions 1–41 are disordered; sequence MSETAPAAPAAAPPAEKAPVKKKAAKKAGGTPRKASGPPVS. Residue S2 is modified to N-acetylserine; partial. The residue at position 2 (S2) is a Phosphoserine. K17 is modified (N6-acetyllysine). N6-(2-hydroxyisobutyryl)lysine is present on residues K23, K26, and K27. K34 bears the N6-(beta-hydroxybutyryl)lysine; alternate mark. K34 carries the N6-crotonyllysine; alternate modification. Position 34 is an N6-methyllysine; alternate (K34). An H15 domain is found at 36–109; that stretch reads SGPPVSELIT…GASGSFKLNK (74 aa). K46 is modified (N6-(2-hydroxyisobutyryl)lysine). An N6-(beta-hydroxybutyryl)lysine; alternate modification is found at K52. N6-(2-hydroxyisobutyryl)lysine; alternate is present on K52. R54 is subject to Citrulline. Residue K63 is modified to N6-(2-hydroxyisobutyryl)lysine. The residue at position 64 (K64) is an N6-(beta-hydroxybutyryl)lysine; alternate. N6-crotonyllysine; alternate is present on K64. The residue at position 64 (K64) is an N6-(2-hydroxyisobutyryl)lysine; alternate. 2 positions are modified to N6-(2-hydroxyisobutyryl)lysine: K75 and K81. N6-(beta-hydroxybutyryl)lysine; alternate is present on residues K85 and K90. K85, K90, and K97 each carry N6-crotonyllysine; alternate. 3 positions are modified to N6-(2-hydroxyisobutyryl)lysine; alternate: K85, K90, and K97. A disordered region spans residues 92–213; it reads TLVQTKGTGA…KPKKAAPKKK (122 aa). Residue K97 is modified to N6-succinyllysine; alternate. The residue at position 104 (S104) is a Phosphoserine; by PKC. An N6-(beta-hydroxybutyryl)lysine modification is found at K106. 5 positions are modified to N6-(2-hydroxyisobutyryl)lysine: K110, K117, K121, K129, and K136. Positions 119–140 are enriched in basic residues; sequence KVKKAGGTKPKKPVGAAKKPKK. Position 146 is a phosphothreonine (T146). K148 carries the post-translational modification N6-(2-hydroxyisobutyryl)lysine. Over residues 149 to 160 the composition is skewed to basic residues; that stretch reads KSAKKTPKKAKK. N6-crotonyllysine; alternate occurs at positions 159 and 168. N6-(2-hydroxyisobutyryl)lysine; alternate occurs at positions 159 and 168. Over residues 169 to 186 the composition is skewed to basic residues; that stretch reads KVAKSPKKAKVAKPKKAA. K187 carries the post-translational modification N6-methyllysine; by EHMT1 and EHMT2. An ADP-ribosylserine modification is found at S188. Positions 193–213 are enriched in basic residues; sequence VKPKAAKPKVVKPKKAAPKKK. N6-(2-hydroxyisobutyryl)lysine is present on K213.

The protein belongs to the histone H1/H5 family. As to quaternary structure, interacts with TSC22D1 isoforms 2 and 5. H1 histones are progressively phosphorylated during the cell cycle, becoming maximally phosphorylated during late G2 phase and M phase, and being dephosphorylated sharply thereafter. In terms of processing, crotonylation (Kcr) is specifically present in male germ cells and marks testis-specific genes in post-meiotic cells, including X-linked genes that escape sex chromosome inactivation in haploid cells. Crotonylation marks active promoters and enhancers and confers resistance to transcriptional repressors. It is also associated with post-meiotically activated genes on autosomes. Post-translationally, citrullination at Arg-54 (H1R54ci) by PADI4 takes place within the DNA-binding site of H1 and results in its displacement from chromatin and global chromatin decondensation, thereby promoting pluripotency and stem cell maintenance. ADP-ribosylated on Ser-188 in response to DNA damage.

Its subcellular location is the nucleus. The protein localises to the chromosome. Its function is as follows. Histone H1 protein binds to linker DNA between nucleosomes forming the macromolecular structure known as the chromatin fiber. Histones H1 are necessary for the condensation of nucleosome chains into higher-order structured fibers. Also acts as a regulator of individual gene transcription through chromatin remodeling, nucleosome spacing and DNA methylation. This chain is Histone H1.2, found in Homo sapiens (Human).